An 83-amino-acid polypeptide reads, in one-letter code: Putative beta-neurotoxin RjAa12f (83 aa).

An N-terminal signal peptide occupies residues 1–18; that stretch reads MKILIFIIASFMLIGVEC. An LCN-type CS-alpha/beta domain is found at 19–82; it reads KEGYPMGRDG…VWDSSTNKCG (64 aa). Disulfide bonds link cysteine 29–cysteine 81, cysteine 33–cysteine 55, cysteine 40–cysteine 62, and cysteine 44–cysteine 64. Glycine 83 is a propeptide.

In terms of processing, contains 4 disulfide bonds. Expressed by the venom gland.

The protein localises to the secreted. Functionally, beta toxins bind voltage-independently at site-4 of sodium channels (Nav) and shift the voltage of activation toward more negative potentials thereby affecting sodium channel activation and promoting spontaneous and repetitive firing. This toxin is lethal to insects (A.domestica). It is not toxic to mice and does not affect mammal F11 sodium channels. The chain is Putative beta-neurotoxin RjAa12f from Rhopalurus junceus (Caribbean blue scorpion).